A 310-amino-acid chain; its full sequence is 4-hydroxyproline 2-epimerase (310 aa).

C85 functions as the Proton acceptor in the catalytic mechanism. Substrate contacts are provided by residues 86-87, H205, and D231; that span reads GH. C235 serves as the catalytic Proton donor. 236 to 237 is a substrate binding site; sequence GT.

Belongs to the proline racemase family.

The catalysed reaction is trans-4-hydroxy-L-proline = cis-4-hydroxy-D-proline. Its function is as follows. Catalyzes the epimerization of trans-4-hydroxy-L-proline (t4LHyp) to cis-4-hydroxy-D-proline (c4DHyp). May be involved in a degradation pathway of t4LHyp, which would allow L.aggregata to grow on t4LHyp as a sole carbon source. Displays no proline racemase activity. This chain is 4-hydroxyproline 2-epimerase, found in Roseibium aggregatum (strain ATCC 25650 / DSM 13394 / JCM 20685 / NBRC 16684 / NCIMB 2208 / IAM 12614 / B1) (Stappia aggregata).